Here is a 248-residue protein sequence, read N- to C-terminus: Probable transcriptional regulatory protein Rsph17025_0577 (248 aa).

Residues 1-21 (MAGHSKWANIQHRKGKQDKLR) form a disordered region.

It belongs to the TACO1 family.

The protein localises to the cytoplasm. This Cereibacter sphaeroides (strain ATCC 17025 / ATH 2.4.3) (Rhodobacter sphaeroides) protein is Probable transcriptional regulatory protein Rsph17025_0577.